Consider the following 271-residue polypeptide: Probable short-chain type dehydrogenase/reductase VdlC (271 aa).

Position 1 to 25 (Met-1 to Lys-25) interacts with NAD(+). Ser-129 serves as a coordination point for substrate. Tyr-142 serves as the catalytic Proton acceptor.

It belongs to the short-chain dehydrogenases/reductases (SDR) family.

The polypeptide is Probable short-chain type dehydrogenase/reductase VdlC (vdlC) (Helicobacter pylori (strain J99 / ATCC 700824) (Campylobacter pylori J99)).